The following is a 265-amino-acid chain: Gap junction beta-4 protein (265 aa).

An intramembrane segment occupies 2–13; the sequence is NWGFLQGILSGV. At 14-20 the chain is on the cytoplasmic side; that stretch reads NKYSTAL. The chain crosses the membrane as a helical span at residues 21–40; the sequence is GRIWLSVVFIFRVLVYVVAA. At 41-73 the chain is on the extracellular side; sequence EEVWDDEQKDFICNTKQPGCPNVCYDEFFPVSH. Cystine bridges form between Cys-53-Cys-175, Cys-60-Cys-169, and Cys-64-Cys-164. Residues 74–94 traverse the membrane as a helical segment; sequence VRLWALQLILVTCPSLLVVMH. Residues 95 to 130 are Cytoplasmic-facing; sequence VAYREERERKHRLKHGPDAPALYSNLSKKRGGLWWT. A helical membrane pass occupies residues 131 to 151; the sequence is YLLSLIFKAAVDSGFLYIFHC. The Extracellular segment spans residues 152 to 184; that stretch reads IYKDYDMPRVVACSVQPCPHTVDCYISRPTEKK. The chain crosses the membrane as a helical span at residues 185 to 205; that stretch reads VFTYFMVVTAAICILLNLSEV. The Cytoplasmic portion of the chain corresponds to 206–265; it reads AYLVGKRCMEVFRPRRQKTSRRHQLPDTCPPYVISKGHPQDESTVLTKAGMATVDAGVYP.

This sequence belongs to the connexin family. Beta-type (group I) subfamily. In terms of assembly, a hemichannel or connexon is composed of a hexamer of connexins. A functional gap junction is formed by the apposition of two hemichannels. Forms heteromeric channels with GJB2. In terms of tissue distribution, detected in adult heart, kidney, skin and cochlea, where it is detected in spiral ganglion, stria vascularis, spiral limbus and spiral ligament (at protein level).

It is found in the cell membrane. It localises to the cell junction. The protein localises to the gap junction. Functionally, structural component of gap junctions. Gap junctions are dodecameric channels that connect the cytoplasm of adjoining cells. They are formed by the docking of two hexameric hemichannels, one from each cell membrane. Small molecules and ions diffuse from one cell to a neighboring cell via the central pore. The sequence is that of Gap junction beta-4 protein (Gjb4) from Rattus norvegicus (Rat).